A 202-amino-acid chain; its full sequence is uncharacterized protein (202 aa).

The first 19 residues, 1–19, serve as a signal peptide directing secretion; that stretch reads MRRKNGFSVASVFILCSIA. Residues 177 to 199 traverse the membrane as a helical segment; the sequence is FLASSSSSFSSFLPSIAIILFFV.

It localises to the membrane. This is an uncharacterized protein from Caenorhabditis elegans.